An 804-amino-acid chain; its full sequence is Lon protease 2 (804 aa).

Positions 6 to 199 (MPVCPVRGSV…AVLVLLEAEL (194 aa)) constitute a Lon N-terminal domain. 362–369 (GPPGVGKT) is a binding site for ATP. One can recognise a Lon proteolytic domain in the interval 598-779 (EPQVGVATGM…DQVLDLALVG (182 aa)). Catalysis depends on residues S685 and K728.

Belongs to the peptidase S16 family. In terms of assembly, homohexamer. Organized in a ring with a central cavity.

The protein localises to the cytoplasm. The enzyme catalyses Hydrolysis of proteins in presence of ATP.. ATP-dependent serine protease that mediates the selective degradation of mutant and abnormal proteins as well as certain short-lived regulatory proteins. Required for cellular homeostasis and for survival from DNA damage and developmental changes induced by stress. Degrades polypeptides processively to yield small peptide fragments that are 5 to 10 amino acids long. Binds to DNA in a double-stranded, site-specific manner. The sequence is that of Lon protease 2 from Thermus thermophilus (strain ATCC BAA-163 / DSM 7039 / HB27).